We begin with the raw amino-acid sequence, 260 residues long: 3'-5' ssDNA/RNA exonuclease TatD (260 aa).

A divalent metal cation is bound by residues Glu92, His128, and His153.

This sequence belongs to the metallo-dependent hydrolases superfamily. TatD-type hydrolase family. TatD subfamily. As to quaternary structure, monomer. It depends on Mg(2+) as a cofactor.

The protein localises to the cytoplasm. 3'-5' exonuclease that prefers single-stranded DNA and RNA. May play a role in the H(2)O(2)-induced DNA damage repair. The chain is 3'-5' ssDNA/RNA exonuclease TatD from Pectobacterium carotovorum subsp. carotovorum (strain PC1).